The sequence spans 467 residues: Argininosuccinate lyase (467 aa).

Belongs to the lyase 1 family. Argininosuccinate lyase subfamily.

The protein localises to the cytoplasm. The catalysed reaction is 2-(N(omega)-L-arginino)succinate = fumarate + L-arginine. It functions in the pathway amino-acid biosynthesis; L-arginine biosynthesis; L-arginine from L-ornithine and carbamoyl phosphate: step 3/3. The sequence is that of Argininosuccinate lyase from Anaeromyxobacter sp. (strain K).